Consider the following 228-residue polypeptide: 2,3-bisphosphoglycerate-dependent phosphoglycerate mutase (228 aa).

Residues 8–15 (RHGQSQWN), 21–22 (TG), R60, 87–90 (ERHY), K98, 114–115 (RR), and 180–181 (GN) contribute to the substrate site. The active-site Tele-phosphohistidine intermediate is the H9. E87 (proton donor/acceptor) is an active-site residue.

This sequence belongs to the phosphoglycerate mutase family. BPG-dependent PGAM subfamily. Homodimer.

It catalyses the reaction (2R)-2-phosphoglycerate = (2R)-3-phosphoglycerate. It functions in the pathway carbohydrate degradation; glycolysis; pyruvate from D-glyceraldehyde 3-phosphate: step 3/5. Catalyzes the interconversion of 2-phosphoglycerate and 3-phosphoglycerate. In Sphingopyxis alaskensis (strain DSM 13593 / LMG 18877 / RB2256) (Sphingomonas alaskensis), this protein is 2,3-bisphosphoglycerate-dependent phosphoglycerate mutase.